We begin with the raw amino-acid sequence, 243 residues long: Orotidine 5'-phosphate decarboxylase (243 aa).

Residues Asp16, Lys38, 65–74 (DLKLHDIPNT), Thr120, Arg181, Gln190, Gly210, and Arg211 contribute to the substrate site. The Proton donor role is filled by Lys67.

This sequence belongs to the OMP decarboxylase family. Type 1 subfamily. As to quaternary structure, homodimer.

The catalysed reaction is orotidine 5'-phosphate + H(+) = UMP + CO2. Its pathway is pyrimidine metabolism; UMP biosynthesis via de novo pathway; UMP from orotate: step 2/2. In terms of biological role, catalyzes the decarboxylation of orotidine 5'-monophosphate (OMP) to uridine 5'-monophosphate (UMP). This is Orotidine 5'-phosphate decarboxylase from Bradyrhizobium sp. (strain BTAi1 / ATCC BAA-1182).